The following is a 362-amino-acid chain: 3-dehydroquinate synthase (362 aa).

NAD(+)-binding positions include 71-76, 105-109, 129-130, Lys-142, Lys-151, and 169-172; these read DGEQYK, GVIGD, TT, and CLQT. Zn(2+) contacts are provided by Glu-184, His-247, and His-264.

It belongs to the sugar phosphate cyclases superfamily. Dehydroquinate synthase family. It depends on Co(2+) as a cofactor. Zn(2+) is required as a cofactor. NAD(+) serves as cofactor.

The protein localises to the cytoplasm. It carries out the reaction 7-phospho-2-dehydro-3-deoxy-D-arabino-heptonate = 3-dehydroquinate + phosphate. Its pathway is metabolic intermediate biosynthesis; chorismate biosynthesis; chorismate from D-erythrose 4-phosphate and phosphoenolpyruvate: step 2/7. In terms of biological role, catalyzes the conversion of 3-deoxy-D-arabino-heptulosonate 7-phosphate (DAHP) to dehydroquinate (DHQ). In Cronobacter sakazakii (strain ATCC BAA-894) (Enterobacter sakazakii), this protein is 3-dehydroquinate synthase.